A 2336-amino-acid polypeptide reads, in one-letter code: Voltage-dependent N-type calcium channel subunit alpha-1B (2336 aa).

Residues 1-37 form a disordered region; the sequence is MVRFGDELGGRYGGTGGGERARGGGAGGAGGPGQGGL. The Cytoplasmic segment spans residues 1 to 90; the sequence is MVRFGDELGG…DNVVRKYAKR (90 aa). A compositionally biased stretch (gly residues) spans 10–37; the sequence is GRYGGTGGGERARGGGAGGAGGPGQGGL. R22 carries the post-translational modification Omega-N-methylarginine. Residues 82 to 359 form an I repeat; the sequence is NVVRKYAKRI…LVLGVLSGEF (278 aa). Residues 91-114 traverse the membrane as a helical segment; sequence ITEWPPFEYMILATIIANCIVLAL. The Extracellular segment spans residues 115–131; the sequence is EQHLPDGDKTPMSERLD. Residues 132–152 form a helical membrane-spanning segment; sequence DTEPYFIGIFCFEAGIKIIAL. Topologically, residues 153-163 are cytoplasmic; the sequence is GFVFHKGSYLR. A helical transmembrane segment spans residues 164-182; the sequence is NGWNVMDFVVVLTEILATA. Residues 183–187 lie on the Extracellular side of the membrane; the sequence is GTDFD. The helical transmembrane segment at 188–211 threads the bilayer; that stretch reads LRTLRAVRVLRPLKLVSGIPSLQV. Residues 212–221 lie on the Cytoplasmic side of the membrane; that stretch reads VLKSIMKAMV. The chain crosses the membrane as a helical span at residues 222–244; the sequence is PLLQIGLLLFFAILMFAIIGLEF. Residues 245–331 lie on the Extracellular side of the membrane; sequence YMGKFHKACF…NTNDAAGNTW (87 aa). N-linked (GlcNAc...) asparagine glycosylation is present at N256. A helical transmembrane segment spans residues 332-356; sequence NWLYFIPLIIIGSFFMLNLVLGVLS. The Cytoplasmic portion of the chain corresponds to 357–483; the sequence is GEFAKERERV…FLIRRMVKAQ (127 aa). The segment at 379–396 is binding to the beta subunit; sequence QQIERELNGYLEWIFKAE. Position 411 is a phosphoserine (S411). 452 to 459 lines the ATP pocket; it reads ASLKSGKT. An II repeat occupies 469 to 713; sequence EKMFRFLIRR…VFLAIAVDNL (245 aa). The chain crosses the membrane as a helical span at residues 484 to 502; it reads SFYWVVLCVVALNTLCVAM. Over 503–512 the chain is Extracellular; sequence VHYNQPQRLT. A helical membrane pass occupies residues 513 to 535; it reads TALYFAEFVFLGLFLTEMSLKMY. Topologically, residues 536 to 545 are cytoplasmic; that stretch reads GLGPRSYFRS. Residue S545 participates in a 1,2-diacyl-sn-glycero-3-phospho-(1D-myo-inositol-4,5-bisphosphate) binding. The chain crosses the membrane as a helical span at residues 546–567; it reads SFNCFDFGVIVGSIFEVVWAAI. Residues 568–574 are Extracellular-facing; that stretch reads KPGTSFG. The helical transmembrane segment at 575 to 587 threads the bilayer; the sequence is ISVLRALRLLRIF. A 1,2-diacyl-sn-glycero-3-phospho-(1D-myo-inositol-4,5-bisphosphate)-binding residues include R585 and K588. Residues 588–605 lie on the Cytoplasmic side of the membrane; sequence KVTKYWNSLRNLVVSLLN. Residues 606 to 631 traverse the membrane as a helical segment; it reads SMKSIISLLFLLFLFIVVFALLGMQL. Topologically, residues 632 to 683 are extracellular; the sequence is FGGQFNFQDETPTTNFDTFPAAILTVFQILTGEDWNAVMYHGIESQGGVSKG. Residues 684–710 form a helical membrane-spanning segment; it reads MFSSFYFIVLTLFGNYTLLNVFLAIAV. Residues 711–1149 are Cytoplasmic-facing; the sequence is DNLANAQELT…FCHYIVTMRY (439 aa). Phosphoserine is present on residues S746, S749, and S784. Disordered regions lie at residues 800-1021 and 1051-1076; these read YAST…HQPK and EQPEDADNQRNVTRMGSQPSDPSTTV. Composition is skewed to basic and acidic residues over residues 806–827, 870–891, 920–930, 938–948, 970–981, and 996–1021; these read VRPDMKTHMDRPLVVEPGRDGL, EQDRTDCPKAESTETGAREERA, GSPEEATEREP, HAQDSSKEGKE, GPRETENSEEPT, and PPEREVAEKESNVVEGDKETRNHQPK. The segment covering 1059–1076 has biased composition (polar residues); sequence QRNVTRMGSQPSDPSTTV. S1067 is subject to Phosphoserine. The stretch at 1135-1421 is one III repeat; that stretch reads NLLRRFCHYI…IFVALIIITF (287 aa). Residues 1150-1168 traverse the membrane as a helical segment; that stretch reads FEMVILVVIALSSIALAAE. Residues 1169-1176 are Extracellular-facing; that stretch reads DPVRTDSF. A helical membrane pass occupies residues 1177–1201; that stretch reads RNNALKYMDYIFTGVFTFEMVIKMI. The Cytoplasmic segment spans residues 1202–1215; the sequence is DLGLLLHPGAYFRD. Residues 1216-1240 traverse the membrane as a helical segment; it reads LWNILDFIVVSGALVAFAFSSFMGG. At 1241–1246 the chain is on the extracellular side; it reads SKGKDI. A helical membrane pass occupies residues 1247–1267; the sequence is NTIKSLRVLRVLRPLKTIKRL. Over 1268 to 1285 the chain is Cytoplasmic; sequence PKLKAVFDCVVNSLKNVL. Residues 1286-1305 traverse the membrane as a helical segment; it reads NILIVYMLFMFIFAVIAVQL. Over 1306–1392 the chain is Extracellular; sequence FKGKFFYCTD…EQGPSPGFRM (87 aa). The chain crosses the membrane as a helical span at residues 1393 to 1418; that stretch reads ELSIFYVVYFVVFPFFFVNIFVALII. Over 1419–1473 the chain is Cytoplasmic; that stretch reads ITFQEQGDKVMSECSLEKNERACIDFAISAKPLTRYMPQNKQSFQYKTWTFVVSP. One copy of the IV repeat lies at 1458 to 1711; that stretch reads NKQSFQYKTW…LFVAVIMDNF (254 aa). Residues 1474–1492 traverse the membrane as a helical segment; it reads PFEYFIMAMIALNTVVLMM. The Extracellular segment spans residues 1493–1500; that stretch reads KFYDAPYE. A helical transmembrane segment spans residues 1501 to 1525; the sequence is YELMLKCLNIVFTSMFSLECILKII. Over 1526–1535 the chain is Cytoplasmic; it reads AFGVLNYFRD. Residues 1536–1557 form a helical membrane-spanning segment; sequence AWNVFDFVTVLGSITDILVTEI. The Extracellular segment spans residues 1558–1563; sequence ANNFIN. N1563 carries an N-linked (GlcNAc...) asparagine glycan. Residues 1564–1582 form a helical membrane-spanning segment; the sequence is LSFLRLFRAARLIKLCRQG. Residues 1583 to 1601 are Cytoplasmic-facing; sequence YTIRILLWTFVQSFKALPY. The chain crosses the membrane as a helical span at residues 1602 to 1621; that stretch reads VCLLIAMLFFIYAIIGMQVF. Topologically, residues 1622–1683 are extracellular; that stretch reads GNIALDDGTS…ANASECGSDF (62 aa). N1675 carries an N-linked (GlcNAc...) asparagine glycan. A helical membrane pass occupies residues 1684 to 1707; that stretch reads AYFYFVSFIFLCSFLMLNLFVAVI. The Cytoplasmic portion of the chain corresponds to 1708 to 2336; the sequence is MDNFEYLTRD…YHHPDQDHWC (629 aa). One can recognise an EF-hand domain in the interval 1724-1759; it reads HHLDEFIRVWAEYDPAACGRISYNDMFEMLKHMSPP. The Ca(2+) site is built by D1737, R1743, and D1748. The segment at 1981 to 2202 is disordered; the sequence is TLRGPDGEPQ…TPRPSITYKT (222 aa). The segment covering 2048–2062 has biased composition (basic residues); the sequence is SHHHHHRCHRRRDKK. Position 2065 is a phosphoserine (S2065). Residues 2097–2113 are compositionally biased toward basic and acidic residues; it reads CRRERKQERGRSQERRQ. Positions 2161–2177 are enriched in polar residues; sequence GSGSVNGSPLMSTSGAS. A phosphoserine mark is found at S2221, S2230, and S2253.

This sequence belongs to the calcium channel alpha-1 subunit (TC 1.A.1.11) family. CACNA1B subfamily. Multisubunit complex consisting of alpha-1, alpha-2, beta and delta subunits in a 1:1:1:1 ratio. The channel activity is directed by the pore-forming and voltage-sensitive alpha-1 subunit. In many cases, this subunit is sufficient to generate voltage-sensitive calcium channel activity. The auxiliary subunits beta and alpha-2/delta linked by a disulfide bridge regulate the channel activity. Interacts with RIMS1. Interacts with FMR1 (via C-terminus); this interaction induces a decrease in the number of presynaptic functional CACNA1B channels at the cell surface. Post-translationally, phosphorylated in vitro by CaM-kinase II, PKA, PKC and CGPK. Central nervous system.

Its subcellular location is the membrane. It carries out the reaction Ca(2+)(in) = Ca(2+)(out). With respect to regulation, is specifically blocked by omega-conotoxin GVIA. Is specifically blocked by omega-conotoxin MVIIA (ziconotide). Is insensitive to dihydropyridines (DHP). Voltage-sensitive calcium channels (VSCC) mediate the entry of calcium ions into excitable cells and are also involved in a variety of calcium-dependent processes, including muscle contraction, hormone or neurotransmitter release, gene expression, cell motility, cell division and cell death. This alpha-1B subunit gives rise to N-type calcium currents. N-type calcium channels belong to the 'high-voltage activated' (HVA) group. They are involved in pain signaling. Calcium channels containing alpha-1B subunit may play a role in directed migration of immature neurons. Mediates Ca(2+) release probability at hippocampal neuronal soma and synaptic terminals. In Rattus norvegicus (Rat), this protein is Voltage-dependent N-type calcium channel subunit alpha-1B (Cacna1b).